The primary structure comprises 150 residues: MASYRLLLLCLAGLVFVSEAGPAGAGESKCPLMVKVLDAVRGSPAVNVGVKVFKKAADGTWEPFALGKTSEFGELHGLTTDEKFVEGIYKVELDTKSYWKALGISPFHEYAEVVFTANDSGRRHYTIAALLSPYSYSTTALVSSPKEGAL.

The signal sequence occupies residues 1–20; that stretch reads MASYRLLLLCLAGLVFVSEA. The residue at position 30 (C30) is a Sulfocysteine. K35 contributes to the L-thyroxine binding site. E62 is subject to 4-carboxyglutamate. An L-thyroxine-binding site is contributed by E74. Residue N118 is glycosylated (N-linked (GlcNAc...) asparagine). S137 serves as a coordination point for L-thyroxine.

The protein belongs to the transthyretin family. Homotetramer. Dimer of dimers. In the homotetramer, subunits assemble around a central channel that can accommodate two ligand molecules. Interacts with RBP4. In terms of processing, sulfonation of the reactive cysteine Cys-30 enhances the stability of the native conformation of TTR, avoiding misassembly of the protein leading to amyloid formation. Detected in plasma and cerebrospinal fluid (at protein level). Highly expressed in the choroid plexus. Detected in liver.

The protein localises to the secreted. Its function is as follows. Thyroid hormone-binding protein. Probably transports thyroxine from the bloodstream to the brain. The protein is Transthyretin (TTR) of Sus scrofa (Pig).